Here is a 305-residue protein sequence, read N- to C-terminus: MFFTPPQLQKLEQDWNGLAVRDWMIANVDVVLYISFLYLGFVFIGPKLFAKLVGTNPAAAAAGARSADGTGSPIVRRSMVVWNLALSIFSIFGTSTVTPVLLRNLANKGFYGATCDFKETEFYTTNVGFWMGIFALSKIPELVDTIFLVLQGKQELPFLHWYHHVTVLLFSWHTYCVGSSAYIWVAAMNYSVHSVMYLYFALAALGYKRVVRPLAPYITIIQILQMVVGCYVTIFALQELHGEGGRGCGVSPANMRIQLVMYASYLYLFSKMFVASYIRPPKRPTVGGPSSTAGVSNGSVEKKVK.

A run of 7 helical transmembrane segments spans residues 24-44, 80-100, 129-149, 158-178, 183-203, 217-237, and 257-277; these read MIAN…FVFI, VVWN…VTPV, FWMG…IFLV, FLHW…YCVG, IWVA…FALA, YITI…IFAL, and IQLV…VASY. Residues 160-164 carry the HxxHH motif motif; that stretch reads HWYHH. Histidine 163 functions as the Nucleophile in the catalytic mechanism. Positions 284–305 are disordered; that stretch reads PTVGGPSSTAGVSNGSVEKKVK. The segment covering 288-299 has biased composition (polar residues); that stretch reads GPSSTAGVSNGS. An N-linked (GlcNAc...) asparagine glycan is attached at asparagine 297.

This sequence belongs to the ELO family.

It localises to the endoplasmic reticulum membrane. The catalysed reaction is an acyl-CoA + malonyl-CoA + H(+) = a 3-oxoacyl-CoA + CO2 + CoA. Its pathway is lipid metabolism; fatty acid biosynthesis. In terms of biological role, involved in the synthesis of fatty acids. Elongates C4 fatty acids to C10. This Trypanosoma brucei brucei (strain 927/4 GUTat10.1) protein is Fatty acid elongase 1.